Here is a 123-residue protein sequence, read N- to C-terminus: Large ribosomal subunit protein bL12 (123 aa).

The protein belongs to the bacterial ribosomal protein bL12 family. In terms of assembly, homodimer. Part of the ribosomal stalk of the 50S ribosomal subunit. Forms a multimeric L10(L12)X complex, where L10 forms an elongated spine to which 2 to 4 L12 dimers bind in a sequential fashion. Binds GTP-bound translation factors.

Its function is as follows. Forms part of the ribosomal stalk which helps the ribosome interact with GTP-bound translation factors. Is thus essential for accurate translation. This chain is Large ribosomal subunit protein bL12, found in Psychrobacter arcticus (strain DSM 17307 / VKM B-2377 / 273-4).